The following is a 193-amino-acid chain: Interleukin-18 (193 aa).

Residues 1–36 constitute a propeptide that is removed on maturation; that stretch reads MAAEQVEDNCISFVEMKFINNTLYFVAENDEDLESD.

The protein belongs to the IL-1 family. In terms of assembly, forms a ternary complex with ligand-binding receptor subunit IL18R1 and signaling receptor subunit IL18RAP at the plasma membrane. Mature IL18 first binds to IL18R1 forming a low affinity binary complex, which then interacts with IL18RAP to form a high affinity ternary complex that signals inside the cell. Interacts with cargo receptor TMED10; the interaction mediates the translocation from the cytoplasm into the ERGIC (endoplasmic reticulum-Golgi intermediate compartment) and thereby secretion. In terms of processing, the pro-IL-18 precursor is processed by CASP1, CASP4 or CASP5 to yield its mature, active form. The pro-IL-18 precursor features autoinhibitory interactions between the propeptide and the post-cleavage-site region, preventing recognition by the IL18R1 receptor. Processing by CASP1, CASP4 or CASP5 induces conformational changes to generate critical receptor-binding sites. The mature form is then secreted and released in the extracellular milieu by passing through the gasdermin-D (GSDMD) pore. In contrast, cleavage by CASP3 inactivates IL18.

Its subcellular location is the cytoplasm. It localises to the cytosol. The protein localises to the secreted. In terms of biological role, pro-inflammatory cytokine primarily involved in epithelial barrier repair, polarized T-helper 1 (Th1) cell and natural killer (NK) cell immune responses. Upon binding to IL18R1 and IL18RAP, forms a signaling ternary complex which activates NF-kappa-B, triggering synthesis of inflammatory mediators. Synergizes with IL12/interleukin-12 to induce IFNG synthesis from T-helper 1 (Th1) cells and natural killer (NK) cells. Involved in transduction of inflammation downstream of pyroptosis: its mature form is specifically released in the extracellular milieu by passing through the gasdermin-D (GSDMD) pore. This is Interleukin-18 (IL18) from Boselaphus tragocamelus (Nilgai).